The primary structure comprises 113 residues: UPF0339 protein MS1092 (113 aa).

2 tandem repeats follow at residues 11–59 (AKDG…NFEF) and 62–110 (NKNG…IKDI).

The protein belongs to the UPF0339 family. Duplicated subfamily.

This chain is UPF0339 protein MS1092, found in Mannheimia succiniciproducens (strain KCTC 0769BP / MBEL55E).